An 828-amino-acid polypeptide reads, in one-letter code: Leucine--tRNA ligase (828 aa).

The short motif at 36–46 (PYPSGKIHIGH) is the 'HIGH' region element. The 'KMSKS' region signature appears at 595 to 599 (KMSKS). Residue lysine 598 participates in ATP binding.

It belongs to the class-I aminoacyl-tRNA synthetase family.

It is found in the cytoplasm. It carries out the reaction tRNA(Leu) + L-leucine + ATP = L-leucyl-tRNA(Leu) + AMP + diphosphate. The polypeptide is Leucine--tRNA ligase (Rickettsia prowazekii (strain Madrid E)).